Here is a 93-residue protein sequence, read N- to C-terminus: Aspartyl/glutamyl-tRNA(Asn/Gln) amidotransferase subunit C (93 aa).

It belongs to the GatC family. Heterotrimer of A, B and C subunits.

The catalysed reaction is L-glutamyl-tRNA(Gln) + L-glutamine + ATP + H2O = L-glutaminyl-tRNA(Gln) + L-glutamate + ADP + phosphate + H(+). It catalyses the reaction L-aspartyl-tRNA(Asn) + L-glutamine + ATP + H2O = L-asparaginyl-tRNA(Asn) + L-glutamate + ADP + phosphate + 2 H(+). Allows the formation of correctly charged Asn-tRNA(Asn) or Gln-tRNA(Gln) through the transamidation of misacylated Asp-tRNA(Asn) or Glu-tRNA(Gln) in organisms which lack either or both of asparaginyl-tRNA or glutaminyl-tRNA synthetases. The reaction takes place in the presence of glutamine and ATP through an activated phospho-Asp-tRNA(Asn) or phospho-Glu-tRNA(Gln). The protein is Aspartyl/glutamyl-tRNA(Asn/Gln) amidotransferase subunit C of Helicobacter pylori (strain HPAG1).